The sequence spans 287 residues: Leukocyte-associated immunoglobulin-like receptor 1 (287 aa).

The N-terminal stretch at 1 to 21 (MSPHPTALLGLVLCLAQTIHT) is a signal peptide. Residues 22–165 (QEEDLPRPSI…SQGLKAEHLY (144 aa)) lie on the Extracellular side of the membrane. The Ig-like C2-type domain maps to 29-117 (PSISAEPGTV…KWSEQSDYLE (89 aa)). The cysteines at positions 49 and 101 are disulfide-linked. A glycan (N-linked (GlcNAc...) asparagine) is linked at N69. Residues 121 to 155 (KESSGGPDSPDTEPGSSAGPTQRPSDNSHNEHAPA) are disordered. Polar residues predominate over residues 134 to 145 (PGSSAGPTQRPS). A helical membrane pass occupies residues 166-186 (ILIGVSVVFLFCLLLLVLFCL). Over 187-287 (HRQNQIKQGP…SITYAAVARH (101 aa)) the chain is Cytoplasmic. The tract at residues 192 to 211 (IKQGPPRSKDEEQKPQQRPD) is disordered. A compositionally biased stretch (basic and acidic residues) spans 198–208 (RSKDEEQKPQQ). 2 consecutive short sequence motifs (ITIM motif) follow at residues 249-254 (VTYAQL) and 279-284 (ITYAAV). 2 positions are modified to phosphotyrosine: Y251 and Y281.

In terms of assembly, interacts with SH2 domains of tyrosine-protein phosphatases PTPN6 and PTPN11. The interaction with PTPN6 is constitutive. Interacts with the SH2 domain of CSK. Binds with high affinity to extracellular matrix collagens, the interaction is functionally important. In terms of processing, phosphorylation at Tyr-251 and Tyr-281 activates it. May be phosphorylated by LCK. Post-translationally, N-glycosylated. As to expression, expressed on the majority of peripheral mononuclear cells, including natural killer (NK) cells, T-cells, B-cells, monocytes, and dendritic cells. Highly expressed in naive T-cells and B-cells but no expression on germinal center B-cells. Abnormally low expression in naive B-cells from HIV-1 infected patients. Very low expression in NK cells from a patient with chronic active Epstein-Barr virus infection.

It localises to the cell membrane. Its function is as follows. Functions as an inhibitory receptor that plays a constitutive negative regulatory role on cytolytic function of natural killer (NK) cells, B-cells and T-cells. Activation by Tyr phosphorylation results in recruitment and activation of the phosphatases PTPN6 and PTPN11. It also reduces the increase of intracellular calcium evoked by B-cell receptor ligation. May also play its inhibitory role independently of SH2-containing phosphatases. Modulates cytokine production in CD4+ T-cells, down-regulating IL2 and IFNG production while inducing secretion of transforming growth factor beta. Also down-regulates IgG and IgE production in B-cells as well as IL8, IL10 and TNF secretion. Inhibits proliferation and induces apoptosis in myeloid leukemia cell lines as well as prevents nuclear translocation of NF-kappa-B p65 subunit/RELA and phosphorylation of I-kappa-B alpha/CHUK in these cells. Inhibits the differentiation of peripheral blood precursors towards dendritic cells. In Homo sapiens (Human), this protein is Leukocyte-associated immunoglobulin-like receptor 1 (LAIR1).